A 292-amino-acid polypeptide reads, in one-letter code: MSTVADTRLLPGKPVRARILSEVSAYVNQVGRIGKLVSISIGNVPEVAVYVRNQARAASAVGVPFDQQLWDRSISQEVCQSLIREMNDDPDVLGIILQRPVPDHINVRALQAAIHPLKDVEGMNPASIGNIVYNDVAMAPCTAAAAIELIRETGLSMAGLEVVMVGHSEIVGKPVAMMLMAEGATVTVCHHMTRSDAMHSRRADVVVVAVGKAHLIGPDMIKPGAVVIDIGINHVPGPDGPVVVGDVQTDAVKDVAGWITPVPGGVGLVTVAILLRNAIRAHQQQRAAGWIH.

NADP(+) contacts are provided by residues 166–168 and Ile232; that span reads GHS.

Belongs to the tetrahydrofolate dehydrogenase/cyclohydrolase family. Homodimer.

The catalysed reaction is (6R)-5,10-methylene-5,6,7,8-tetrahydrofolate + NADP(+) = (6R)-5,10-methenyltetrahydrofolate + NADPH. It carries out the reaction (6R)-5,10-methenyltetrahydrofolate + H2O = (6R)-10-formyltetrahydrofolate + H(+). Its pathway is one-carbon metabolism; tetrahydrofolate interconversion. Catalyzes the oxidation of 5,10-methylenetetrahydrofolate to 5,10-methenyltetrahydrofolate and then the hydrolysis of 5,10-methenyltetrahydrofolate to 10-formyltetrahydrofolate. The polypeptide is Bifunctional protein FolD 2 (Ruegeria pomeroyi (strain ATCC 700808 / DSM 15171 / DSS-3) (Silicibacter pomeroyi)).